The primary structure comprises 901 residues: Protein translocase subunit SecA (901 aa).

ATP is bound by residues glutamine 87, 105-109, and aspartate 512; that span reads GEGKT. Cysteine 885, cysteine 887, cysteine 896, and histidine 897 together coordinate Zn(2+).

This sequence belongs to the SecA family. As to quaternary structure, monomer and homodimer. Part of the essential Sec protein translocation apparatus which comprises SecA, SecYEG and auxiliary proteins SecDF-YajC and YidC. Zn(2+) is required as a cofactor.

Its subcellular location is the cell inner membrane. It localises to the cytoplasm. The enzyme catalyses ATP + H2O + cellular proteinSide 1 = ADP + phosphate + cellular proteinSide 2.. In terms of biological role, part of the Sec protein translocase complex. Interacts with the SecYEG preprotein conducting channel. Has a central role in coupling the hydrolysis of ATP to the transfer of proteins into and across the cell membrane, serving both as a receptor for the preprotein-SecB complex and as an ATP-driven molecular motor driving the stepwise translocation of polypeptide chains across the membrane. The sequence is that of Protein translocase subunit SecA from Salmonella agona (strain SL483).